The primary structure comprises 349 residues: Hypoxia-inducible factor 1-alpha inhibitor (349 aa).

Residues 1 to 10 (MAATAAEAVA) show a composition bias toward low complexity. The disordered stretch occupies residues 1 to 51 (MAATAAEAVASGSGEPREEAGALGPAWDESQLRSYSFPTRPIPRLSQSDPR). Position 2 is an N-acetylalanine (Ala2). An interaction with VHL region spans residues 2 to 125 (AATAAEAVAS…PRSNREEMKF (124 aa)). The region spanning 142-312 (ERLYLQQTLN…PKRIEYPLKA (171 aa)) is the JmjC domain. Tyr145 contributes to the 2-oxoglutarate binding site. Residues Asp152 and 181–183 (QLT) contribute to the substrate site. 2-oxoglutarate is bound at residue Thr196. 2 residues coordinate Fe cation: His199 and Asp201. 201–203 (DEQ) is a substrate binding site. 2-oxoglutarate contacts are provided by Asn205 and Lys214. A substrate-binding site is contributed by 238-239 (RQ). His279 contributes to the Fe cation binding site. Residue Asn294 participates in 2-oxoglutarate binding. 2 residues coordinate substrate: Ala300 and Asn321.

In terms of assembly, homodimer; homodimerization is essential for catalytic activity. Interacts with VHL and HIF1A. Part of a complex with VHL, HIF1A and HDAC1 or HDAC2 or HDAC3. Interacts with NFKB1 and NFKBIA. Interacts with NOTCH1, NOTCH2 and NOTCH3 but not with NOTCH4. Interacts with APBA3; binding inhibits HIF1AN binding to HIF1A. Interacts with TNKS2. Interacts with PPP1R12A. Interacts with ASB4. Interacts with UBE3A. Interacts with ANKS3. Interacts with NECAB3; the interaction is indirect and seems to be mediated by APBA3. Requires Fe(2+) as cofactor.

Its subcellular location is the nucleus. It localises to the cytoplasm. The protein localises to the perinuclear region. The enzyme catalyses L-asparaginyl-[hypoxia-inducible factor alpha subunit] + 2-oxoglutarate + O2 = (3S)-3-hydroxy-L-asparaginyl-[hypoxia-inducible factor alpha subunit] + succinate + CO2. It carries out the reaction L-histidyl-[ankyrin-repeat domain protein] + 2-oxoglutarate + O2 = (3S)-3-hydroxy-L-histidyl-[ankyrin-repeat domain protein] + succinate + CO2. The catalysed reaction is L-asparaginyl-[ankyrin-repeat domain protein] + 2-oxoglutarate + O2 = (3S)-3-hydroxy-L-asparaginyl-[ankyrin-repeat domain protein] + succinate + CO2. It catalyses the reaction L-aspartyl-[ankyrin-repeat domain protein] + 2-oxoglutarate + O2 = (3S)-3-hydroxy-L-aspartyl-[ankyrin-repeat domain protein] + succinate + CO2. Its function is as follows. Hydroxylates HIF-1 alpha at 'Asn-803' in the C-terminal transactivation domain (CAD). Functions as an oxygen sensor and, under normoxic conditions, the hydroxylation prevents interaction of HIF-1 with transcriptional coactivators including Cbp/p300-interacting transactivator. Involved in transcriptional repression through interaction with HIF1A, VHL and histone deacetylases. Hydroxylates specific Asn residues within ankyrin repeat domains (ARD) of NFKB1, NFKBIA, NOTCH1, ASB4, PPP1R12A and several other ARD-containing proteins. Also hydroxylates Asp and His residues within ARDs of ANK1 and TNKS2, respectively. Negatively regulates NOTCH1 activity, accelerating myogenic differentiation. Positively regulates ASB4 activity, promoting vascular differentiation. The protein is Hypoxia-inducible factor 1-alpha inhibitor (HIF1AN) of Homo sapiens (Human).